The chain runs to 209 residues: Large ribosomal subunit protein uL3 (209 aa).

Residues 128-163 (AHRGPMTHGSKFHRAVGSMGASSDPSRTFKNKRMPG) form a disordered region.

This sequence belongs to the universal ribosomal protein uL3 family. As to quaternary structure, part of the 50S ribosomal subunit. Forms a cluster with proteins L14 and L19.

In terms of biological role, one of the primary rRNA binding proteins, it binds directly near the 3'-end of the 23S rRNA, where it nucleates assembly of the 50S subunit. The chain is Large ribosomal subunit protein uL3 from Clostridium botulinum (strain 657 / Type Ba4).